The sequence spans 336 residues: Glyceraldehyde-3-phosphate dehydrogenase (336 aa).

NAD(+) is bound by residues 12-13, Asp34, and Arg79; that span reads RI. Residues 150 to 152, Thr181, 210 to 211, and Arg233 contribute to the D-glyceraldehyde 3-phosphate site; these read SCT and TG. The active-site Nucleophile is the Cys151. Asn315 lines the NAD(+) pocket.

Belongs to the glyceraldehyde-3-phosphate dehydrogenase family. In terms of assembly, homotetramer.

It localises to the cytoplasm. The enzyme catalyses D-glyceraldehyde 3-phosphate + phosphate + NAD(+) = (2R)-3-phospho-glyceroyl phosphate + NADH + H(+). It functions in the pathway carbohydrate degradation; glycolysis; pyruvate from D-glyceraldehyde 3-phosphate: step 1/5. The sequence is that of Glyceraldehyde-3-phosphate dehydrogenase (gpdA) from Aspergillus niger.